Consider the following 141-residue polypeptide: Putative pre-16S rRNA nuclease (141 aa).

This sequence belongs to the YqgF nuclease family.

The protein resides in the cytoplasm. Its function is as follows. Could be a nuclease involved in processing of the 5'-end of pre-16S rRNA. This Pseudomonas putida (strain ATCC 47054 / DSM 6125 / CFBP 8728 / NCIMB 11950 / KT2440) protein is Putative pre-16S rRNA nuclease.